Consider the following 221-residue polypeptide: 7-cyano-7-deazaguanine synthase (221 aa).

ATP is bound at residue 9 to 19; it reads YSGGMDSFTLL. Cys-185, Cys-193, Cys-196, and Cys-199 together coordinate Zn(2+).

Belongs to the QueC family. Requires Zn(2+) as cofactor.

The catalysed reaction is 7-carboxy-7-deazaguanine + NH4(+) + ATP = 7-cyano-7-deazaguanine + ADP + phosphate + H2O + H(+). Its pathway is purine metabolism; 7-cyano-7-deazaguanine biosynthesis. Catalyzes the ATP-dependent conversion of 7-carboxy-7-deazaguanine (CDG) to 7-cyano-7-deazaguanine (preQ(0)). The protein is 7-cyano-7-deazaguanine synthase of Marinobacter nauticus (strain ATCC 700491 / DSM 11845 / VT8) (Marinobacter aquaeolei).